Reading from the N-terminus, the 397-residue chain is CCA-adding enzyme (397 aa).

ATP contacts are provided by G26 and R29. CTP-binding residues include G26 and R29. Mg(2+) contacts are provided by D39 and D41. Residues R110, D153, R156, R159, and R162 each contribute to the ATP site. Residues R110, D153, R156, R159, and R162 each coordinate CTP.

Belongs to the tRNA nucleotidyltransferase/poly(A) polymerase family. Bacterial CCA-adding enzyme type 3 subfamily. In terms of assembly, homodimer. Mg(2+) is required as a cofactor.

The catalysed reaction is a tRNA precursor + 2 CTP + ATP = a tRNA with a 3' CCA end + 3 diphosphate. It catalyses the reaction a tRNA with a 3' CCA end + 2 CTP + ATP = a tRNA with a 3' CCACCA end + 3 diphosphate. Functionally, catalyzes the addition and repair of the essential 3'-terminal CCA sequence in tRNAs without using a nucleic acid template. Adds these three nucleotides in the order of C, C, and A to the tRNA nucleotide-73, using CTP and ATP as substrates and producing inorganic pyrophosphate. tRNA 3'-terminal CCA addition is required both for tRNA processing and repair. Also involved in tRNA surveillance by mediating tandem CCA addition to generate a CCACCA at the 3' terminus of unstable tRNAs. While stable tRNAs receive only 3'-terminal CCA, unstable tRNAs are marked with CCACCA and rapidly degraded. This chain is CCA-adding enzyme, found in Bacillus cytotoxicus (strain DSM 22905 / CIP 110041 / 391-98 / NVH 391-98).